Here is a 559-residue protein sequence, read N- to C-terminus: Polypeptide N-acetylgalactosaminyltransferase 1 (559 aa).

The Cytoplasmic segment spans residues 1–8; that stretch reads MRKFAYCK. Residues 9-28 traverse the membrane as a helical; Signal-anchor for type II membrane protein segment; sequence VVLATSLIWVLLDMFLLLYF. The Lumenal segment spans residues 29–559; that stretch reads SECNKCDEKK…LRNVTLPEIF (531 aa). The interval 45-65 is disordered; it reads GDVLEPVQKPHEGPGEMGKPV. Asparagine 95 is a glycosylation site (N-linked (GlcNAc...) asparagine). Cystine bridges form between cysteine 106/cysteine 339, cysteine 330/cysteine 408, cysteine 442/cysteine 459, cysteine 482/cysteine 497, and cysteine 523/cysteine 540. Residues 115-225 are catalytic subdomain A; the sequence is LPTTSVVIVF…VGWLEPLLAR (111 aa). Substrate contacts are provided by aspartate 156 and arginine 186. The Mn(2+) site is built by aspartate 209 and histidine 211. Positions 285–347 are catalytic subdomain B; sequence PVRTPTMAGG…TCSHVGHVFR (63 aa). Position 316 (tryptophan 316) interacts with substrate. Histidine 344 lines the Mn(2+) pocket. Arginine 347 and tyrosine 352 together coordinate substrate. Positions 429–551 constitute a Ricin B-type lectin domain; sequence FSLGEIRNVE…GSRSQQWLLR (123 aa). Asparagine 552 is a glycosylation site (N-linked (GlcNAc...) asparagine).

This sequence belongs to the glycosyltransferase 2 family. GalNAc-T subfamily. Mn(2+) serves as cofactor. In terms of tissue distribution, widely expressed. Expressed in all tissues tested.

It localises to the golgi apparatus. The protein resides in the golgi stack membrane. Its subcellular location is the secreted. The catalysed reaction is L-seryl-[protein] + UDP-N-acetyl-alpha-D-galactosamine = a 3-O-[N-acetyl-alpha-D-galactosaminyl]-L-seryl-[protein] + UDP + H(+). It carries out the reaction L-threonyl-[protein] + UDP-N-acetyl-alpha-D-galactosamine = a 3-O-[N-acetyl-alpha-D-galactosaminyl]-L-threonyl-[protein] + UDP + H(+). Its pathway is protein modification; protein glycosylation. Catalyzes the initial reaction in O-linked oligosaccharide biosynthesis, the transfer of an N-acetyl-D-galactosamine residue to a serine or threonine residue on the protein receptor. Has a broad spectrum of substrates such as apomucin-, MUC5AC-, MUC1- and MUC2-derived peptides. The chain is Polypeptide N-acetylgalactosaminyltransferase 1 from Homo sapiens (Human).